The chain runs to 184 residues: Protein N-terminal glutamine amidohydrolase (184 aa).

Residues Cys-14, His-63, and Asp-78 contribute to the active site.

It belongs to the NTAQ1 family. In terms of assembly, monomer.

The enzyme catalyses N-terminal L-glutaminyl-[protein] + H2O = N-terminal L-glutamyl-[protein] + NH4(+). In terms of biological role, mediates the side-chain deamidation of N-terminal glutamine residues to glutamate, an important step in N-end rule pathway of protein degradation. Conversion of the resulting N-terminal glutamine to glutamate renders the protein susceptible to arginylation, polyubiquitination and degradation as specified by the N-end rule. Does not act on substrates with internal or C-terminal glutamine and does not act on non-glutamine residues in any position. In Caenorhabditis elegans, this protein is Protein N-terminal glutamine amidohydrolase.